The following is a 184-amino-acid chain: Endoribonuclease YbeY (184 aa).

The Zn(2+) site is built by H118, H122, and H128. A disordered region spans residues 156-184 (YHQDRQSQKDQRLLDKSRYFDELNHGDTP). A compositionally biased stretch (basic and acidic residues) spans 157–184 (HQDRQSQKDQRLLDKSRYFDELNHGDTP).

It belongs to the endoribonuclease YbeY family. Requires Zn(2+) as cofactor.

Its subcellular location is the cytoplasm. Single strand-specific metallo-endoribonuclease involved in late-stage 70S ribosome quality control and in maturation of the 3' terminus of the 16S rRNA. This chain is Endoribonuclease YbeY, found in Mycolicibacterium vanbaalenii (strain DSM 7251 / JCM 13017 / BCRC 16820 / KCTC 9966 / NRRL B-24157 / PYR-1) (Mycobacterium vanbaalenii).